We begin with the raw amino-acid sequence, 56 residues long: Preprotein translocase subunit SecG (56 aa).

Topologically, residues Met1–Ser30 are cytoplasmic. A helical membrane pass occupies residues Pro31 to Thr52. Residues Ser53–Tyr56 lie on the Extracellular side of the membrane.

Belongs to the SEC61-beta family. In terms of assembly, component of the protein translocase complex. Heterotrimer consisting of alpha (SecY), beta (SecG) and gamma (SecE) subunits. Can form oligomers of the heterotrimer.

The protein resides in the cell membrane. Functionally, involved in protein export. The function of the beta subunit is unknown, but it may be involved in stabilization of the trimeric complex. The protein is Preprotein translocase subunit SecG of Methanosphaera stadtmanae (strain ATCC 43021 / DSM 3091 / JCM 11832 / MCB-3).